We begin with the raw amino-acid sequence, 117 residues long: Large ribosomal subunit protein bL20 (117 aa).

This sequence belongs to the bacterial ribosomal protein bL20 family.

Its function is as follows. Binds directly to 23S ribosomal RNA and is necessary for the in vitro assembly process of the 50S ribosomal subunit. It is not involved in the protein synthesizing functions of that subunit. This is Large ribosomal subunit protein bL20 from Vibrio campbellii (strain ATCC BAA-1116).